We begin with the raw amino-acid sequence, 348 residues long: Anthranilate phosphoribosyltransferase (348 aa).

Residues G81, 84–85, 91–94, 109–117, and S121 contribute to the 5-phospho-alpha-D-ribose 1-diphosphate site; these read GD, NVST, and KHGNRAVSG. G81 contributes to the anthranilate binding site. S93 lines the Mg(2+) pocket. N112 serves as a coordination point for anthranilate. R167 lines the anthranilate pocket. Positions 226 and 227 each coordinate Mg(2+).

It belongs to the anthranilate phosphoribosyltransferase family. In terms of assembly, homodimer. It depends on Mg(2+) as a cofactor.

The enzyme catalyses N-(5-phospho-beta-D-ribosyl)anthranilate + diphosphate = 5-phospho-alpha-D-ribose 1-diphosphate + anthranilate. It functions in the pathway amino-acid biosynthesis; L-tryptophan biosynthesis; L-tryptophan from chorismate: step 2/5. In terms of biological role, catalyzes the transfer of the phosphoribosyl group of 5-phosphorylribose-1-pyrophosphate (PRPP) to anthranilate to yield N-(5'-phosphoribosyl)-anthranilate (PRA). The sequence is that of Anthranilate phosphoribosyltransferase from Stutzerimonas stutzeri (strain A1501) (Pseudomonas stutzeri).